Consider the following 299-residue polypeptide: Hairy/enhancer-of-split related with YRPW motif protein 1 (299 aa).

Residues 1 to 53 are disordered; it reads MKRAHPDYSSSDSELDETIEVEKESADENGNLSSALCSMSPTTSSQVLARKRR. Positions 28 to 47 are enriched in polar residues; it reads ENGNLSSALCSMSPTTSSQV. The transcriptional repression and interaction with NCOR1 and SIN3A stretch occupies residues 48 to 117; sequence LARKRRRGII…GGKGYFDAHA (70 aa). A bHLH domain is found at 49-104; the sequence is ARKRRRGIIEKRRRDRINNSLSELRRLVPSAFEKQGSAKLEKAEILQMTVDHLKML. An Orange domain is found at 122–158; sequence YRSLGFRECLAEVARYLSIIEGLDASDPLLVRLVSHL. Positions 194–234 are disordered; the sequence is LLLPQNGHGNAGTAASPTEPHHQGRLASAHPEAPALRAPPS. The YRPW motif signature appears at 289 to 292; that stretch reads YRPW.

It belongs to the HEY family. As to quaternary structure, may self-associate. Interacts with HES1, NCOR1 and SIN3A. Interacts with GATA4, GATA6 and HDAC1 and HEYL. Interacts with CCDC89/BOIP. In terms of tissue distribution, expressed in somitic mesoderm, brain, central nervous system, kidney, heart, nasal epithelium, limbs, lung, muscle, ovary and testis.

Its subcellular location is the nucleus. Functionally, transcriptional repressor which binds preferentially to the canonical E box sequence 5'-CACGTG-3'. Downstream effector of Notch signaling required for cardiovascular development. Specifically required for the Notch-induced endocardial epithelial to mesenchymal transition, which is itself criticial for cardiac valve and septum development. May be required in conjunction with HEY2 to specify arterial cell fate or identity. Promotes maintenance of neuronal precursor cells and glial versus neuronal fate specification. Represses transcription by the cardiac transcriptional activators GATA4 and GATA6 and by the neuronal bHLH factors ASCL1/MASH1 and NEUROD4/MATH3. The polypeptide is Hairy/enhancer-of-split related with YRPW motif protein 1 (Hey1) (Mus musculus (Mouse)).